Reading from the N-terminus, the 409-residue chain is Sex-determination protein fem-3 (409 aa).

In terms of assembly, component of a complex containing fem-1, fem-2 and fem-3. Interacts with fem-1 and fem-2 (via N-terminus). Part of a E3 ubiquitin-protein ligase complex, at least composed of cul-2, elc-1, tra-1, fem-1, fem-2 and fem-3; mediates the ubiquitination and subsequent proteasomal degradation of tra-1. Interacts with sel-10. Interacts with tra-2.

Functionally, required for male development. In XO (male) animals, fem-3 directs male differentiation in all tissues. In XX (hermaphrodite animals), it specifies the first 80 or so germ cells to be sperm. Negatively regulates male development when bound to tra-2. This is Sex-determination protein fem-3 from Caenorhabditis briggsae.